A 91-amino-acid chain; its full sequence is Sec-independent protein translocase protein TatA (91 aa).

A helical membrane pass occupies residues 3-23 (FFGIGLPEMLVILAIALLVFG). Positions 57–91 (DRTPATPAEATVEPPVLDSAPTEAVTVEKQTETQV) are disordered. A compositionally biased stretch (low complexity) spans 59-72 (TPATPAEATVEPPV).

This sequence belongs to the TatA/E family. As to quaternary structure, forms a complex with TatC.

It localises to the cell inner membrane. Part of the twin-arginine translocation (Tat) system that transports large folded proteins containing a characteristic twin-arginine motif in their signal peptide across membranes. TatA could form the protein-conducting channel of the Tat system. This is Sec-independent protein translocase protein TatA from Synechococcus elongatus (strain ATCC 33912 / PCC 7942 / FACHB-805) (Anacystis nidulans R2).